We begin with the raw amino-acid sequence, 226 residues long: 3-dehydroquinate dehydratase (226 aa).

3-dehydroquinate is bound by residues S21, 42 to 44 (EVR), and R70. H124 functions as the Proton donor/acceptor in the catalytic mechanism. The active-site Schiff-base intermediate with substrate is K149. Positions 187, 206, and 210 each coordinate 3-dehydroquinate.

This sequence belongs to the type-I 3-dehydroquinase family. Homodimer.

The enzyme catalyses 3-dehydroquinate = 3-dehydroshikimate + H2O. It participates in metabolic intermediate biosynthesis; chorismate biosynthesis; chorismate from D-erythrose 4-phosphate and phosphoenolpyruvate: step 3/7. Involved in the third step of the chorismate pathway, which leads to the biosynthesis of aromatic amino acids. Catalyzes the cis-dehydration of 3-dehydroquinate (DHQ) and introduces the first double bond of the aromatic ring to yield 3-dehydroshikimate. This is 3-dehydroquinate dehydratase from Methanothrix thermoacetophila (strain DSM 6194 / JCM 14653 / NBRC 101360 / PT) (Methanosaeta thermophila).